Reading from the N-terminus, the 354-residue chain is WASH complex subunit 3 (354 aa).

Residues 76-354 are disordered; that stretch reads SSANVPVHNT…DDDDDDDESW (279 aa). The segment covering 107–143 has biased composition (pro residues); that stretch reads IPPPPPPPPPPMTGVPPPPPPPPPPPISKSNIPPPPA. A compositionally biased stretch (acidic residues) spans 150–159; that stretch reads ESDDDDEDNN. The span at 213–244 shows a compositional bias: pro residues; the sequence is PQPPQPQPQSPSPQPPPPPTTTSSIPVPPPPF. Acidic residues predominate over residues 251–260; sequence SDDDDDDDEG. Residues 277–290 are compositionally biased toward low complexity; the sequence is NNNSNSNSYSNNNN. 2 stretches are compositionally biased toward acidic residues: residues 293 to 307 and 342 to 354; these read DDDDDDDDDDDDDDN and DADDDDDDDDESW.

Belongs to the CCDC53 family. As to quaternary structure, probable component of the WASH complex.

The protein is WASH complex subunit 3 of Dictyostelium discoideum (Social amoeba).